The primary structure comprises 122 residues: Probable DNA-directed RNA polymerase II subunit RPB11 (122 aa).

It belongs to the archaeal Rpo11/eukaryotic RPB11/RPC19 RNA polymerase subunit family. In terms of assembly, component of the RNA polymerase II (Pol II) complex consisting of 12 subunits.

The protein resides in the nucleus. In terms of biological role, DNA-dependent RNA polymerase catalyzes the transcription of DNA into RNA using the four ribonucleoside triphosphates as substrates. Component of RNA polymerase II which synthesizes mRNA precursors and many functional non-coding RNAs. Pol II is the central component of the basal RNA polymerase II transcription machinery. It is composed of mobile elements that move relative to each other. RPB11 is part of the core element with the central large cleft. This is Probable DNA-directed RNA polymerase II subunit RPB11 (rpb-11) from Caenorhabditis briggsae.